The primary structure comprises 132 residues: Large ribosomal subunit protein bL12 (132 aa).

It belongs to the bacterial ribosomal protein bL12 family. In terms of assembly, homodimer. Part of the ribosomal stalk of the 50S ribosomal subunit. Forms a multimeric L10(L12)X complex, where L10 forms an elongated spine to which 2 to 4 L12 dimers bind in a sequential fashion. Binds GTP-bound translation factors.

Forms part of the ribosomal stalk which helps the ribosome interact with GTP-bound translation factors. Is thus essential for accurate translation. This chain is Large ribosomal subunit protein bL12, found in Chloroflexus aggregans (strain MD-66 / DSM 9485).